Consider the following 1186-residue polypeptide: MSLKFILGTASYDHHQALVTNLKATFQEKPQERYFYLVPNHIKFESEVSILEALKSDENDYVAASQIQVFSLTRLAWYFMKNTPYYQIPRISTAGLNMLVFRLLQEHQEQLQLFRGEVRHTGFVAQLTKQLLELKIGCITPADLTAMAENLGDQQVELAKKLHDLTIIATAFEAAMQKRFIENTALIDALTLFLQQQTLTDCHFYVEGFAQFTAQEQALLTTLMQQSEVQIGFILDRAYPNQQPDGLNFFFQAGRTYYNLYQQARLNHVPVMMDQMADSQRLTPALAALDQFWVSSESPGNRKLSPVPVADHLHVVAAENRYAELRYVAREIRRLVQTGHYRYRDFLILTRHLAPYQTMIAPILTEYEIPYFCDLPQTMAAHPLVSLLEKLLDVNLHFYRYEDVMALLKTELLIPKGMSIAEFRADLDLCENLILKNGYEGKDWLNDFDWQFYRFGSYQEGTRTTQDEALTERINGIRRYVQATLPPFYRALKAAKTGRQVVQVLYQFLIDHGVDRQLLHWRDQALAANQVAQAGQPEQTWSTFMQMLDEYVTLLGDVSFEEDNTEQLNEFKQLLSAGFAAAQYAQIPSTLDQVVLSESGMVQTKKRQITFMIGSTDQVMPDQIENTALLTDQDRQRLLDNEGQVTPLLNESSVGKMNAEPYLNYLAFLSSQTTVYFTYPLGNGEGTAFKISPYVERIRNHFDLTIQKIAAEQSLQSTETPQGSWRSLLSDLIQVSRQAQENQTLIPEQWLTTYRLLQQAPQSQFLTTQLFQSLNYRNEPERLTPEIVTGLYGNEIHTSISKLEEFYQNQYAYFLKYGLKLQERPVFELTPANTGNFYHEVMDRFIKLIQGQQIALPELDDQQIDKLVSEVLAKTYEQPEFKILNKTARMGYIRQQLMQTVKRVSLALRNQSLSTNLRPLATEVLFGQVGAEKGLQGLNFMLDDHREVKVRGKIDRIDQLTINNQPYLGIVDYKSSQHSFNFRDAYYGLALQMLTYLETVLQDQQAILPANSAVKPAGAFYLHLKNPTLTLKQLTKKKMGQLQKGEFDQMLLDQFKYNGLIVNDEELLENLDTTLVNGQSPLFAFSKLKSGKFSSKQLVTLNQLDLLMAHNEDLIKEAGQAIFAGDTALNPIMRPDRTNALTLSPFKSIFQFDAMLPENNYRQLEALDEKAVLERLMSKKGDGNLE.

The protein belongs to the helicase family. AddB/RexB type 2 subfamily. In terms of assembly, heterodimer of AddA and RexB. Mg(2+) serves as cofactor.

Functionally, the heterodimer acts as both an ATP-dependent DNA helicase and an ATP-dependent, dual-direction single-stranded exonuclease. Recognizes the chi site generating a DNA molecule suitable for the initiation of homologous recombination. This subunit has 5' -&gt; 3' nuclease activity but not helicase activity. The polypeptide is ATP-dependent helicase/deoxyribonuclease subunit B (Latilactobacillus sakei subsp. sakei (strain 23K) (Lactobacillus sakei subsp. sakei)).